Consider the following 517-residue polypeptide: Ribosome assembly protein 4 (517 aa).

Residues 1 to 25 (MATLAPPPSKRQRREEIQRTQTQQD) are disordered. The ubiquitin-like (UBL) domain stretch occupies residues 34–128 (LGSFKANFID…TITLSAEPQA (95 aa)). 8 WD repeats span residues 144–184 (GHGQ…PKFT), 187–226 (GHTGWVLGVSWSPDGKYLATCSMDTTVRVWDPESGKQVNQ), 230–277 (GHAK…HVLS), 278–316 (GHKGSVSCVKWGGTDLIYTGSHDRSVRVWDAVKGTLVHN), 351–397 (EERR…SKPV), 402–441 (GHQNKVNHVQFSPDGTLIASAGWDNSTKLWNARDGKFIKN), 444–483 (GHVAPVYQCAWSADSRLVVTGSKDCTLKVWNVRTGKLAMD), and 486–517 (GHEDEVYAVDWAADGELVASGGKDKAVRTWRN).

The protein belongs to the NLE1/RSA4 family. Associates with the pre-60S ribosomal particle. Interacts (via WD repeats) with uL18. Interacts (via UBL domain) with MDN1 (via VWFA/MIDAS domain). Interacts (via WD repeats) with NSA2.

Its subcellular location is the nucleus. The protein resides in the nucleolus. Its function is as follows. Involved in ribosome biogenesis. Required for processing and efficient intra-nuclear transport of pre-60S ribosomal subunits. Interacts with the AAA-ATPase Midasin, which is essential for the ATP-dependent dissociation of a group of nonribosomal factors from the pre-60S particle. This is Ribosome assembly protein 4 from Chaetomium thermophilum (strain DSM 1495 / CBS 144.50 / IMI 039719) (Thermochaetoides thermophila).